Here is a 204-residue protein sequence, read N- to C-terminus: Colicin-A (204 aa).

A run of 2 helical transmembrane segments spans residues 139–161 (SWVL…LGAY) and 165–187 (LGVP…GALI).

This sequence belongs to the channel forming colicin family.

It localises to the cell membrane. Functionally, this colicin is a channel-forming colicin. This class of transmembrane toxins depolarize the cytoplasmic membrane, leading to dissipation of cellular energy. In terms of biological role, colicins are polypeptide toxins produced by and active against E.coli and closely related bacteria. This is Colicin-A (caa) from Escherichia coli.